The chain runs to 388 residues: Chorismate synthase (388 aa).

2 residues coordinate NADP(+): R39 and R45. Residues 130 to 132, 251 to 252, G296, 311 to 315, and R337 each bind FMN; these read RSS, NA, and KPIPT.

The protein belongs to the chorismate synthase family. Homotetramer. It depends on FMNH2 as a cofactor.

The catalysed reaction is 5-O-(1-carboxyvinyl)-3-phosphoshikimate = chorismate + phosphate. It participates in metabolic intermediate biosynthesis; chorismate biosynthesis; chorismate from D-erythrose 4-phosphate and phosphoenolpyruvate: step 7/7. Functionally, catalyzes the anti-1,4-elimination of the C-3 phosphate and the C-6 proR hydrogen from 5-enolpyruvylshikimate-3-phosphate (EPSP) to yield chorismate, which is the branch point compound that serves as the starting substrate for the three terminal pathways of aromatic amino acid biosynthesis. This reaction introduces a second double bond into the aromatic ring system. The protein is Chorismate synthase of Streptococcus agalactiae serotype V (strain ATCC BAA-611 / 2603 V/R).